The chain runs to 255 residues: tRNA1(Val) (adenine(37)-N6)-methyltransferase (255 aa).

The protein belongs to the methyltransferase superfamily. tRNA (adenine-N(6)-)-methyltransferase family.

It localises to the cytoplasm. It catalyses the reaction adenosine(37) in tRNA1(Val) + S-adenosyl-L-methionine = N(6)-methyladenosine(37) in tRNA1(Val) + S-adenosyl-L-homocysteine + H(+). Specifically methylates the adenine in position 37 of tRNA(1)(Val) (anticodon cmo5UAC). The chain is tRNA1(Val) (adenine(37)-N6)-methyltransferase from Porphyromonas gingivalis (strain ATCC BAA-308 / W83).